A 431-amino-acid polypeptide reads, in one-letter code: Enolase (431 aa).

Residue Q167 coordinates (2R)-2-phosphoglycerate. E209 functions as the Proton donor in the catalytic mechanism. D246, E289, and D316 together coordinate Mg(2+). Residues K341, R370, S371, and K392 each coordinate (2R)-2-phosphoglycerate. Residue K341 is the Proton acceptor of the active site.

It belongs to the enolase family. In terms of assembly, component of the RNA degradosome, a multiprotein complex involved in RNA processing and mRNA degradation. Mg(2+) serves as cofactor.

It localises to the cytoplasm. Its subcellular location is the secreted. The protein localises to the cell surface. It carries out the reaction (2R)-2-phosphoglycerate = phosphoenolpyruvate + H2O. It participates in carbohydrate degradation; glycolysis; pyruvate from D-glyceraldehyde 3-phosphate: step 4/5. Catalyzes the reversible conversion of 2-phosphoglycerate (2-PG) into phosphoenolpyruvate (PEP). It is essential for the degradation of carbohydrates via glycolysis. The polypeptide is Enolase (Chromohalobacter salexigens (strain ATCC BAA-138 / DSM 3043 / CIP 106854 / NCIMB 13768 / 1H11)).